Here is a 645-residue protein sequence, read N- to C-terminus: Exoribonuclease 2 (645 aa).

Residues 191-517 (REDLTELNFI…MNHRLLKALI (327 aa)) enclose the RNB domain. The S1 motif domain maps to 563–645 (HIRYSAEIID…DNRSIIAKIV (83 aa)).

Belongs to the RNR ribonuclease family. RNase II subfamily.

It is found in the cytoplasm. It carries out the reaction Exonucleolytic cleavage in the 3'- to 5'-direction to yield nucleoside 5'-phosphates.. Functionally, involved in mRNA degradation. Hydrolyzes single-stranded polyribonucleotides processively in the 3' to 5' direction. The polypeptide is Exoribonuclease 2 (Baumannia cicadellinicola subsp. Homalodisca coagulata).